The primary structure comprises 230 residues: MTGLFPDNPEAPIDLLALEGQALRRGYFRIAGIDEAGRGPLAGPVVAAAVMLPAGLLLPGVNDSKQLTEEKREELFDVIHREALAVGVGIGDHALVDSINILQATLSAMRDAVRALSITPGFLLIDGISNIPMNIPQRTVKKGDSLSLSIAAASIIAKVTRDRMMVEYDAQYPGYGFASHKGYGAASHLAAIAELGPCPIHRKTFSGVKEHLPSQPDSDTAGPSTGLFSF.

The RNase H type-2 domain maps to 28 to 217 (FRIAGIDEAG…VKEHLPSQPD (190 aa)). A divalent metal cation contacts are provided by Asp-34, Glu-35, and Asp-126. Residues 209 to 230 (KEHLPSQPDSDTAGPSTGLFSF) are disordered. Positions 215 to 230 (QPDSDTAGPSTGLFSF) are enriched in polar residues.

The protein belongs to the RNase HII family. Mn(2+) is required as a cofactor. Mg(2+) serves as cofactor.

The protein resides in the cytoplasm. The catalysed reaction is Endonucleolytic cleavage to 5'-phosphomonoester.. Functionally, endonuclease that specifically degrades the RNA of RNA-DNA hybrids. In Citrifermentans bemidjiense (strain ATCC BAA-1014 / DSM 16622 / JCM 12645 / Bem) (Geobacter bemidjiensis), this protein is Ribonuclease HII.